The following is a 191-amino-acid chain: Probable DNA replication complex GINS protein PSF1 (191 aa).

This sequence belongs to the GINS1/PSF1 family. In terms of assembly, component of the GINS complex which is a heterotetramer of gins1, gins2, gins3 and gins4.

It localises to the nucleus. In terms of biological role, the GINS complex plays an essential role in the initiation of DNA replication. This is Probable DNA replication complex GINS protein PSF1 (gins1) from Dictyostelium discoideum (Social amoeba).